The following is a 90-amino-acid chain: Probable Fe(2+)-trafficking protein (90 aa).

The protein belongs to the Fe(2+)-trafficking protein family.

Could be a mediator in iron transactions between iron acquisition and iron-requiring processes, such as synthesis and/or repair of Fe-S clusters in biosynthetic enzymes. The chain is Probable Fe(2+)-trafficking protein from Delftia acidovorans (strain DSM 14801 / SPH-1).